The chain runs to 573 residues: Oxygen sensor histidine kinase response regulator DosT (573 aa).

2 GAF domains span residues 61-198 (KLDA…GIAV) and 229-366 (DPAM…ALAW). Residue His147 coordinates heme. The Histidine kinase domain maps to 380 to 573 (ILTDRDRIAR…TLLRWSAPLR (194 aa)). His392 is subject to Phosphohistidine; by autocatalysis.

Requires Mg(2+) as cofactor. It depends on heme as a cofactor.

It is found in the cytoplasm. Functionally, interacts with the two-component regulatory system DevR/DevS (DosR/DosS) involved in onset of the dormancy response. Required for full induction of the DevR (DosR) regulon; required during early adaptation to anaerobiosis, to start induction of the DevR regulon. May act as a direct hypoxia/oxygen sensor. May be the secondary sensor for CO. Donates a phosphate group to DevR (DosR). In Mycobacterium tuberculosis (strain CDC 1551 / Oshkosh), this protein is Oxygen sensor histidine kinase response regulator DosT (dosT).